Reading from the N-terminus, the 93-residue chain is DNA-directed RNA polymerase subunit omega (93 aa).

Belongs to the RNA polymerase subunit omega family. As to quaternary structure, the RNAP catalytic core consists of 2 alpha, 1 beta, 1 beta' and 1 omega subunit. When a sigma factor is associated with the core the holoenzyme is formed, which can initiate transcription.

The catalysed reaction is RNA(n) + a ribonucleoside 5'-triphosphate = RNA(n+1) + diphosphate. In terms of biological role, promotes RNA polymerase assembly. Latches the N- and C-terminal regions of the beta' subunit thereby facilitating its interaction with the beta and alpha subunits. This Glaesserella parasuis serovar 5 (strain SH0165) (Haemophilus parasuis) protein is DNA-directed RNA polymerase subunit omega.